A 1129-amino-acid polypeptide reads, in one-letter code: Tyrosine-protein kinase JAK2 (1129 aa).

An FERM domain is found at 35 to 378; it reads PLLQVYLYYS…GYYRLTADAH (344 aa). Position 117 is a phosphotyrosine; by autocatalysis (Y117). In terms of domain architecture, SH2; atypical spans 399–480; that stretch reads HGPIFMDFAI…NLKDLLTCYQ (82 aa). Protein kinase domains are found at residues 542-806 and 846-1118; these read LIFE…NSLF and LKFL…DLAQ. 852-860 serves as a coordination point for ATP; the sequence is LGKGNFGSV. Y865 is subject to Phosphotyrosine; by autocatalysis. Residue K879 coordinates ATP. 2 positions are modified to phosphotyrosine; by autocatalysis: Y963 and Y969. Catalysis depends on D973, which acts as the Proton acceptor. Y1004 and Y1005 each carry phosphotyrosine; by autocatalysis.

The protein belongs to the protein kinase superfamily. Tyr protein kinase family. JAK subfamily. Post-translationally, autophosphorylated, leading to regulate its activity.

It localises to the endomembrane system. Its subcellular location is the nucleus. The enzyme catalyses L-tyrosyl-[protein] + ATP = O-phospho-L-tyrosyl-[protein] + ADP + H(+). Regulated by autophosphorylation, can both activate or decrease activity. Heme regulates its activity by enhancing the phosphorylation on Tyr-1004 and Tyr-1005. Its function is as follows. Non-receptor tyrosine kinase involved in various processes such as cell growth, development, differentiation or histone modifications. Mediates essential signaling events in both innate and adaptive immunity. In the cytoplasm, plays a pivotal role in signal transduction via its association with cytokine receptors. Following ligand-binding to cell surface receptors, phosphorylates specific tyrosine residues on the cytoplasmic tails of the receptor, creating docking sites for STATs proteins. Subsequently, phosphorylates the STATs proteins once they are recruited to the receptor. Phosphorylated STATs then form homodimer or heterodimers and translocate to the nucleus to activate gene transcription. For example, cell stimulation with erythropoietin (EPO) during erythropoiesis leads to JAK2 autophosphorylation, activation, and its association with erythropoietin receptor (EPOR) that becomes phosphorylated in its cytoplasmic domain. Then, STAT5 (STAT5A or STAT5B) is recruited, phosphorylated and activated by JAK2. Once activated, dimerized STAT5 translocates into the nucleus and promotes the transcription of several essential genes involved in the modulation of erythropoiesis. Part of a signaling cascade that is activated by increased cellular retinol and that leads to the activation of STAT5 (STAT5A or STAT5B). In the nucleus, plays a key role in chromatin by specifically mediating phosphorylation of 'Tyr-41' of histone H3 (H3Y41ph), a specific tag that promotes exclusion of CBX5 (HP1 alpha) from chromatin. Up-regulates the potassium voltage-gated channel activity of KCNA3. This chain is Tyrosine-protein kinase JAK2, found in Gallus gallus (Chicken).